The sequence spans 513 residues: Light-independent protochlorophyllide reductase subunit B (513 aa).

Asp36 serves as a coordination point for [4Fe-4S] cluster. The active-site Proton donor is the Asp299. 434–435 is a substrate binding site; the sequence is GM.

It belongs to the ChlB/BchB/BchZ family. As to quaternary structure, protochlorophyllide reductase is composed of three subunits; ChlL, ChlN and ChlB. Forms a heterotetramer of two ChlB and two ChlN subunits. [4Fe-4S] cluster serves as cofactor.

It is found in the plastid. The protein localises to the chloroplast. The catalysed reaction is chlorophyllide a + oxidized 2[4Fe-4S]-[ferredoxin] + 2 ADP + 2 phosphate = protochlorophyllide a + reduced 2[4Fe-4S]-[ferredoxin] + 2 ATP + 2 H2O. It functions in the pathway porphyrin-containing compound metabolism; chlorophyll biosynthesis (light-independent). In terms of biological role, component of the dark-operative protochlorophyllide reductase (DPOR) that uses Mg-ATP and reduced ferredoxin to reduce ring D of protochlorophyllide (Pchlide) to form chlorophyllide a (Chlide). This reaction is light-independent. The NB-protein (ChlN-ChlB) is the catalytic component of the complex. This is Light-independent protochlorophyllide reductase subunit B from Cycas taitungensis (Prince sago).